The primary structure comprises 92 residues: Probable Fe(2+)-trafficking protein (92 aa).

It belongs to the Fe(2+)-trafficking protein family.

Its function is as follows. Could be a mediator in iron transactions between iron acquisition and iron-requiring processes, such as synthesis and/or repair of Fe-S clusters in biosynthetic enzymes. The sequence is that of Probable Fe(2+)-trafficking protein from Shewanella baltica (strain OS223).